A 619-amino-acid polypeptide reads, in one-letter code: Chaperone protein DnaK (619 aa).

The residue at position 175 (T175) is a Phosphothreonine; by autocatalysis. Residues 578–619 form a disordered region; it reads NGGAQGQGFDPNNMGGANAGAGATNNNDDNVVDADFEVQDDK. Residues 589 to 606 are compositionally biased toward low complexity; sequence NNMGGANAGAGATNNNDD. Residues 607–619 are compositionally biased toward acidic residues; sequence NVVDADFEVQDDK.

It belongs to the heat shock protein 70 family.

Its function is as follows. Acts as a chaperone. The chain is Chaperone protein DnaK from Clostridium perfringens (strain ATCC 13124 / DSM 756 / JCM 1290 / NCIMB 6125 / NCTC 8237 / Type A).